Here is a 479-residue protein sequence, read N- to C-terminus: UDP-glycosyltransferase 85A5 (479 aa).

UDP-alpha-D-glucose contacts are provided by residues S301, 358 to 360 (CPQ), 375 to 383 (HSGWNSTLE), and 397 to 400 (FAEQ).

This sequence belongs to the UDP-glycosyltransferase family. Expressed in roots, shoots and leaves.

The protein is UDP-glycosyltransferase 85A5 (UGT85A5) of Arabidopsis thaliana (Mouse-ear cress).